The sequence spans 208 residues: Uracil phosphoribosyltransferase (208 aa).

Residues arginine 78, arginine 103, and aspartate 130–serine 138 contribute to the 5-phospho-alpha-D-ribose 1-diphosphate site. Uracil-binding positions include isoleucine 193 and glycine 198–alanine 200. Aspartate 199 contacts 5-phospho-alpha-D-ribose 1-diphosphate.

This sequence belongs to the UPRTase family. Mg(2+) serves as cofactor.

The catalysed reaction is UMP + diphosphate = 5-phospho-alpha-D-ribose 1-diphosphate + uracil. The protein operates within pyrimidine metabolism; UMP biosynthesis via salvage pathway; UMP from uracil: step 1/1. Allosterically activated by GTP. Functionally, catalyzes the conversion of uracil and 5-phospho-alpha-D-ribose 1-diphosphate (PRPP) to UMP and diphosphate. The sequence is that of Uracil phosphoribosyltransferase from Histophilus somni (strain 129Pt) (Haemophilus somnus).